Consider the following 208-residue polypeptide: Large ribosomal subunit protein uL3 (208 aa).

A disordered region spans residues 123-147 (RHGQSRGPMAHGSRYHRRPGSMGPV).

This sequence belongs to the universal ribosomal protein uL3 family. In terms of assembly, part of the 50S ribosomal subunit. Forms a cluster with proteins L14 and L19.

Its function is as follows. One of the primary rRNA binding proteins, it binds directly near the 3'-end of the 23S rRNA, where it nucleates assembly of the 50S subunit. This Streptococcus sanguinis (strain SK36) protein is Large ribosomal subunit protein uL3.